A 227-amino-acid chain; its full sequence is Cytochrome c oxidase subunit 2 (227 aa).

Topologically, residues 1 to 26 are mitochondrial intermembrane; it reads MSTWKNLFLQDSASPLMELLMCFHDH. A helical transmembrane segment spans residues 27-48; it reads AMLILILITIMVSQMLLSMLFN. Topologically, residues 49-62 are mitochondrial matrix; the sequence is KLSHRYLLEGQLIE. Residues 63-82 form a helical membrane-spanning segment; that stretch reads TIWTIIPAIILILIALPSLR. Topologically, residues 83–227 are mitochondrial intermembrane; that stretch reads LLYILDEINN…LFLNWVISKA (145 aa). Residues histidine 161, cysteine 196, glutamate 198, cysteine 200, histidine 204, and methionine 207 each contribute to the Cu cation site. Glutamate 198 contacts Mg(2+).

The protein belongs to the cytochrome c oxidase subunit 2 family. As to quaternary structure, component of the cytochrome c oxidase (complex IV, CIV), a multisubunit enzyme composed of a catalytic core of 3 subunits and several supernumerary subunits. The complex exists as a monomer or a dimer and forms supercomplexes (SCs) in the inner mitochondrial membrane with ubiquinol-cytochrome c oxidoreductase (cytochrome b-c1 complex, complex III, CIII). Requires Cu cation as cofactor.

The protein resides in the mitochondrion inner membrane. The enzyme catalyses 4 Fe(II)-[cytochrome c] + O2 + 8 H(+)(in) = 4 Fe(III)-[cytochrome c] + 2 H2O + 4 H(+)(out). Functionally, component of the cytochrome c oxidase, the last enzyme in the mitochondrial electron transport chain which drives oxidative phosphorylation. The respiratory chain contains 3 multisubunit complexes succinate dehydrogenase (complex II, CII), ubiquinol-cytochrome c oxidoreductase (cytochrome b-c1 complex, complex III, CIII) and cytochrome c oxidase (complex IV, CIV), that cooperate to transfer electrons derived from NADH and succinate to molecular oxygen, creating an electrochemical gradient over the inner membrane that drives transmembrane transport and the ATP synthase. Cytochrome c oxidase is the component of the respiratory chain that catalyzes the reduction of oxygen to water. Electrons originating from reduced cytochrome c in the intermembrane space (IMS) are transferred via the dinuclear copper A center (CU(A)) of subunit 2 and heme A of subunit 1 to the active site in subunit 1, a binuclear center (BNC) formed by heme A3 and copper B (CU(B)). The BNC reduces molecular oxygen to 2 water molecules using 4 electrons from cytochrome c in the IMS and 4 protons from the mitochondrial matrix. This Sitophilus granarius (Granary weevil) protein is Cytochrome c oxidase subunit 2 (COII).